The primary structure comprises 135 residues: Small ribosomal subunit protein uS11 (135 aa).

The protein belongs to the universal ribosomal protein uS11 family. In terms of assembly, part of the 30S ribosomal subunit. Interacts with proteins S7 and S18. Binds to IF-3.

Its function is as follows. Located on the platform of the 30S subunit, it bridges several disparate RNA helices of the 16S rRNA. Forms part of the Shine-Dalgarno cleft in the 70S ribosome. This Solibacter usitatus (strain Ellin6076) protein is Small ribosomal subunit protein uS11.